Here is a 276-residue protein sequence, read N- to C-terminus: Protein FAM151B (276 aa).

The protein belongs to the menorin family.

In terms of biological role, essential for survival of retinal photoreceptor cells. This chain is Protein FAM151B (FAM151B), found in Homo sapiens (Human).